Consider the following 177-residue polypeptide: ATP synthase subunit delta (177 aa).

This sequence belongs to the ATPase delta chain family. As to quaternary structure, F-type ATPases have 2 components, F(1) - the catalytic core - and F(0) - the membrane proton channel. F(1) has five subunits: alpha(3), beta(3), gamma(1), delta(1), epsilon(1). F(0) has three main subunits: a(1), b(2) and c(10-14). The alpha and beta chains form an alternating ring which encloses part of the gamma chain. F(1) is attached to F(0) by a central stalk formed by the gamma and epsilon chains, while a peripheral stalk is formed by the delta and b chains.

The protein localises to the cell inner membrane. In terms of biological role, f(1)F(0) ATP synthase produces ATP from ADP in the presence of a proton or sodium gradient. F-type ATPases consist of two structural domains, F(1) containing the extramembraneous catalytic core and F(0) containing the membrane proton channel, linked together by a central stalk and a peripheral stalk. During catalysis, ATP synthesis in the catalytic domain of F(1) is coupled via a rotary mechanism of the central stalk subunits to proton translocation. This protein is part of the stalk that links CF(0) to CF(1). It either transmits conformational changes from CF(0) to CF(1) or is implicated in proton conduction. This is ATP synthase subunit delta from Aeromonas salmonicida (strain A449).